Consider the following 376-residue polypeptide: Queuine tRNA-ribosyltransferase accessory subunit 2 (376 aa).

Residues cysteine 323, cysteine 325, cysteine 328, and histidine 354 each contribute to the Zn(2+) site.

Belongs to the queuine tRNA-ribosyltransferase family. QTRT2 subfamily. As to quaternary structure, heterodimer of a catalytic subunit and an accessory subunit. It depends on Zn(2+) as a cofactor.

It localises to the cytoplasm. Its function is as follows. Non-catalytic subunit of the queuine tRNA-ribosyltransferase (TGT) that catalyzes the base-exchange of a guanine (G) residue with queuine (Q) at position 34 (anticodon wobble position) in tRNAs with GU(N) anticodons (tRNA-Asp, -Asn, -His and -Tyr), resulting in the hypermodified nucleoside queuosine (7-(((4,5-cis-dihydroxy-2-cyclopenten-1-yl)amino)methyl)-7-deazaguanosine). This chain is Queuine tRNA-ribosyltransferase accessory subunit 2, found in Caenorhabditis briggsae.